Reading from the N-terminus, the 403-residue chain is Protein IQ-DOMAIN 23 (403 aa).

Residues 1-43 (MGFFGRLFGSKKKSDKAASSRDKRRWSFTTRSSNSSKRAPAVT) are disordered. Residues 10–17 (SKKKSDKA) carry the Nuclear localization signal motif. Positions 27–43 (SFTTRSSNSSKRAPAVT) are enriched in polar residues. The interval 115-133 (QENIAAMKIQSAFRGYLAR) is calmodulin-binding. IQ domains lie at 116–144 (ENIAAMKIQSAFRGYLARRALRALKALVK) and 145–167 (LQALVRGHIVRKQTADMLRRMQT). Disordered stretches follow at residues 176 to 208 (RARASRSSHSSASFHSSTALLFPSSSSSPRSLH), 242 to 301 (ILEV…PTSR), and 381 to 403 (GGDSDRLNRNQSAKSRMHSSFLV). A compositionally biased stretch (basic and acidic residues) spans 257–267 (LRSERNNESPR).

This sequence belongs to the IQD family. Binds to multiple calmodulin (CaM) in the presence of Ca(2+) and CaM-like proteins.

It localises to the nucleus. The protein localises to the nucleolus. It is found in the cytoplasm. The protein resides in the cytoskeleton. Its subcellular location is the cell membrane. Its function is as follows. May be involved in cooperative interactions with calmodulins or calmodulin-like proteins. Recruits calmodulin proteins to microtubules, thus being a potential scaffold in cellular signaling and trafficking. May associate with nucleic acids and regulate gene expression at the transcriptional or post-transcriptional level. The protein is Protein IQ-DOMAIN 23 of Arabidopsis thaliana (Mouse-ear cress).